We begin with the raw amino-acid sequence, 381 residues long: Chymosin (381 aa).

The signal sequence occupies residues Met-1–Ala-16. Residues Ser-17–Leu-58 constitute a propeptide, activation peptide. In terms of domain architecture, Peptidase A1 spans Tyr-74 to Ala-378. The active site involves Asp-92. The cysteines at positions 105 and 110 are disulfide-linked. N-linked (GlcNAc...) asparagine glycosylation is present at Asn-158. An intrachain disulfide couples Cys-265 to Cys-269. The active site involves Asp-274. Residues Cys-308 and Cys-341 are joined by a disulfide bond. Asn-349 carries an N-linked (GlcNAc...) asparagine glycan.

Belongs to the peptidase A1 family.

The catalysed reaction is Broad specificity similar to that of pepsin A. Clots milk by cleavage of a single 104-Ser-Phe-|-Met-Ala-107 bond in kappa-chain of casein.. Chymosin is synthesized in the mucosa of the abomasum (fourth stomach) of young (unweaned) ruminants. The enzyme hydrolyzes casein to paracasein. The sequence is that of Chymosin from Camelus dromedarius (Dromedary).